The chain runs to 159 residues: Aphid transmission protein (159 aa).

The protein belongs to the caulimoviridae ORF II family.

Functionally, this protein is involved in virus transmission. In Cauliflower mosaic virus (strain PV147) (CaMV), this protein is Aphid transmission protein.